A 261-amino-acid chain; its full sequence is Protein OSB1, mitochondrial (261 aa).

Residues Met1–Phe28 constitute a mitochondrion transit peptide. Residues Val55 to Ala155 enclose the SSB domain. A PDF region region spans residues Trp189–Glu238.

Expressed in root elongation zone and in gametophytic cells.

The protein resides in the mitochondrion. Its function is as follows. Regulates mitochondrial DNA recombination. Represses homologous recombination, preventing mitochondrial genome instability and unbalanced transmission of alternative mtDNA configurations. Binds preferentially single-stranded DNA. Does not bind to RNA. The chain is Protein OSB1, mitochondrial (OSB1) from Arabidopsis thaliana (Mouse-ear cress).